The chain runs to 349 residues: DNA polymerase IV (349 aa).

The 185-residue stretch at 3–187 (VLFVDFDYFF…LDISKVPGVG (185 aa)) folds into the UmuC domain. Positions 7 and 105 each coordinate Mg(2+). The active site involves Glu-106.

This sequence belongs to the DNA polymerase type-Y family. In terms of assembly, monomer. Mg(2+) is required as a cofactor.

It localises to the cytoplasm. It catalyses the reaction DNA(n) + a 2'-deoxyribonucleoside 5'-triphosphate = DNA(n+1) + diphosphate. In terms of biological role, poorly processive, error-prone DNA polymerase involved in untargeted mutagenesis. Copies undamaged DNA at stalled replication forks, which arise in vivo from mismatched or misaligned primer ends. These misaligned primers can be extended by PolIV. Exhibits no 3'-5' exonuclease (proofreading) activity. May be involved in translesional synthesis. The sequence is that of DNA polymerase IV from Metallosphaera sedula (strain ATCC 51363 / DSM 5348 / JCM 9185 / NBRC 15509 / TH2).